We begin with the raw amino-acid sequence, 312 residues long: Porphobilinogen deaminase (312 aa).

C241 carries the S-(dipyrrolylmethanemethyl)cysteine modification.

It belongs to the HMBS family. In terms of assembly, monomer. The cofactor is dipyrromethane.

The catalysed reaction is 4 porphobilinogen + H2O = hydroxymethylbilane + 4 NH4(+). Its pathway is porphyrin-containing compound metabolism; protoporphyrin-IX biosynthesis; coproporphyrinogen-III from 5-aminolevulinate: step 2/4. The protein operates within porphyrin-containing compound metabolism; chlorophyll biosynthesis. Its function is as follows. Tetrapolymerization of the monopyrrole PBG into the hydroxymethylbilane pre-uroporphyrinogen in several discrete steps. The polypeptide is Porphobilinogen deaminase (hemC) (Chlorobaculum parvum (strain DSM 263 / NCIMB 8327) (Chlorobium vibrioforme subsp. thiosulfatophilum)).